We begin with the raw amino-acid sequence, 362 residues long: Chorismate synthase (362 aa).

Residue Arg-47 participates in NADP(+) binding. FMN-binding positions include 124–126 (RAS), Gly-286, 301–305 (KPTAT), and Arg-327.

This sequence belongs to the chorismate synthase family. In terms of assembly, homotetramer. It depends on FMNH2 as a cofactor.

It catalyses the reaction 5-O-(1-carboxyvinyl)-3-phosphoshikimate = chorismate + phosphate. Its pathway is metabolic intermediate biosynthesis; chorismate biosynthesis; chorismate from D-erythrose 4-phosphate and phosphoenolpyruvate: step 7/7. Its function is as follows. Catalyzes the anti-1,4-elimination of the C-3 phosphate and the C-6 proR hydrogen from 5-enolpyruvylshikimate-3-phosphate (EPSP) to yield chorismate, which is the branch point compound that serves as the starting substrate for the three terminal pathways of aromatic amino acid biosynthesis. This reaction introduces a second double bond into the aromatic ring system. In Prochlorococcus marinus (strain SARG / CCMP1375 / SS120), this protein is Chorismate synthase.